The sequence spans 740 residues: MEKDLQLRVNEKLDVENILKDLDKYTPKRRGWTWRQPAENLQMGPFIYKDASTPLENSVALPSAKYFGDIDPQPLPVITTEIASGRFEDDIRRMRMAAWHGADHIMVIRTAGQSHYDGLIEGTPQGIGGVPITRKQVRAQRKALDLIEEEVGRPINYHSYVSGVAGPDIAVMFAEEGVNGAHQDPQYNVLYRNINMIRSFIDACESKTIMAWADMAQIDGAHNANATAREAWKVMPELMVQHALNSIFSLKVGMKKSNICLSTVPPTAPPAPSMYLDLPYAVALREMFEGYRMRAQMNTKYMEASTREATVTHVLNLLISKLTRADIQSTITPDEGRNVPWHIYNIEACDTAKQALIGMDGLMDMVQLKREGVLGDTVRELKERAVLFMEEIIEAGGYFNAVEQGFFVDSGYYPERNGDGIARQINGGIGAGTVFERDEDYMAPVTAHFGYNNVKQYDEALVSEPSKLIDGCTLEVPEKIVYIDELDENDNVNVRMEETKEFRHSSMIKPEVEWQADGTVLLTMFLPTSKRVAEFAAIEFAKKMNLEEVEVINREVMQEAEGTRIELKGRVPFSIDINSLVIPPEPEILSEDEIREDIEKTPLKIVAATVGEDEHSVGLREVIDIKHGGIEKYGVEVHYLGTSVPVEKLVDAAIELKADAILASTIISHDDIHYKNMKRIHELAVEKGIRDKIMIGCGGTQVTPEVAVKQGVDAGFGRGSKGIHVATFLVKKRREMREGK.

Residues Glu81, Tyr160, His182, and 294–296 (RAQ) each bind substrate. Residues 602 to 739 (PLKIVAATVG…VKKRREMREG (138 aa)) form the B12-binding domain. Adenosylcob(III)alamin contacts are provided by residues 614 to 616 (EHS) and His615. Lys626 bears the N6-(pyridoxal phosphate)lysine mark. Adenosylcob(III)alamin contacts are provided by residues 664–669 (STIISH), Thr700, and Ser720.

Heterotetramer of 2 alpha (OraS) and 2 beta (OraE) subunits. Adenosylcob(III)alamin serves as cofactor. It depends on pyridoxal 5'-phosphate as a cofactor.

It carries out the reaction D-ornithine = (2R,4S)-2,4-diaminopentanoate. With respect to regulation, increased activity in the presence of dithiothreitol (DTT) in vitro. Inhibited by 1 mM potassium phosphate and potassium chloride. Inhibited by L-alpha-ornithine, D,L-alpha-lysine, L-beta-lysine (50%-60%), L-alpha-lysine (26%) and by delta-amino-n-valeric acid to a lesser extent. Significant decrease in activity is observed in the presence of 0.2 mM p-chloromercuribenzoate, N-ethylmaleimide and also by 2 mM iodoacetate to a lesser extent but not inhibited by arsenite. Functionally, component of a complex that catalyzes the reversible migration of the omega amino group of D-ornithine to C-4 to form (2R,4S)-2,4-diaminopentanoic acid. OraE may be the catalytic subunit. Active only on D-ornithine and 2,4-diaminopentanoic acid but not active on L-ornithine, L-beta-lysine, L-alpha-lysine or D-alpha-lysine. The chain is D-ornithine 4,5-aminomutase subunit beta (oraE) from Acetoanaerobium sticklandii (strain ATCC 12662 / DSM 519 / JCM 1433 / CCUG 9281 / NCIMB 10654 / HF) (Clostridium sticklandii).